Here is a 187-residue protein sequence, read N- to C-terminus: UPF0301 protein YqgE (187 aa).

It belongs to the UPF0301 (AlgH) family.

In Salmonella paratyphi B (strain ATCC BAA-1250 / SPB7), this protein is UPF0301 protein YqgE.